Reading from the N-terminus, the 415-residue chain is Probable G-protein coupled receptor 19 (415 aa).

Residues 1–69 (MVFAHRMDNS…LKPGEVATAS (69 aa)) are Extracellular-facing. N25 and N52 each carry an N-linked (GlcNAc...) asparagine glycan. Residues 70–90 (IFFGILWLFSIFGNSLVCLVI) form a helical membrane-spanning segment. Over 91–102 (HRSRRTQSTTNY) the chain is Cytoplasmic. The chain crosses the membrane as a helical span at residues 103–123 (FVVSMACADLLISVASTPFVL). The Extracellular segment spans residues 124–143 (LQFTTGRWTLGSATCKVVRY). C138 and C210 are oxidised to a cystine. A helical membrane pass occupies residues 144–161 (FQYLTPGVQIYVLLSICI). Residues 162-182 (DRFYTIVYPLSFKVSREKAKK) lie on the Cytoplasmic side of the membrane. The helical transmembrane segment at 183-203 (MIAASWVFDAGFVTPVLFFYG) threads the bilayer. Residues 204–221 (SNWDSHCNYFLPSSWEGT) are Extracellular-facing. The chain crosses the membrane as a helical span at residues 222-242 (AYTVIHFLVGFVIPSVLIILF). The Cytoplasmic portion of the chain corresponds to 243 to 277 (YQKVIKYIWRIGTDGRTVRRTMNIVPRTKVKTIKM). A helical membrane pass occupies residues 278–298 (FLILNLLFLLSWLPFHVAQLW). The Extracellular portion of the chain corresponds to 299–309 (HPHEQDYKKSS). The chain crosses the membrane as a helical span at residues 310 to 325 (LVFTAITWISFSSSAS). The Cytoplasmic segment spans residues 326-415 (KPTLYSIYNA…INSNPPNTFV (90 aa)).

Belongs to the G-protein coupled receptor 1 family. Abundant expression in the brain.

Its subcellular location is the cell membrane. Functionally, G-protein coupled receptor that plays a role in the regulation of circadian rhythms and energy metabolism. Participates in maintaining proper circadian gene expression in the suprachiasmatic nucleus (SCN), the locus of the master circadian clock in the brain. May function as a coordinator of aging-associated metabolic dysfunction, stress response, DNA integrity management, and eventual senescence. Upon binding to adropin, modulates mitochondrial energy metabolism via the p44/42-PDK4 signaling pathway, influencing pyruvate dehydrogenase activity. This Homo sapiens (Human) protein is Probable G-protein coupled receptor 19 (GPR19).